A 387-amino-acid polypeptide reads, in one-letter code: Exodeoxyribonuclease 7 large subunit (387 aa).

The protein belongs to the XseA family. In terms of assembly, heterooligomer composed of large and small subunits.

The protein localises to the cytoplasm. The enzyme catalyses Exonucleolytic cleavage in either 5'- to 3'- or 3'- to 5'-direction to yield nucleoside 5'-phosphates.. Its function is as follows. Bidirectionally degrades single-stranded DNA into large acid-insoluble oligonucleotides, which are then degraded further into small acid-soluble oligonucleotides. In Campylobacter hominis (strain ATCC BAA-381 / DSM 21671 / CCUG 45161 / LMG 19568 / NCTC 13146 / CH001A), this protein is Exodeoxyribonuclease 7 large subunit.